Reading from the N-terminus, the 151-residue chain is MHKAPKGTALAFDFGETRIGVAQGDAELGLSHPLSTVTGGSNDEKFAAIAKLVQEWQPRYFVVGLPVHTDGTKHEMTHLSRKFGRRLNGRFNLPVYWVDERLSSVYAESLLSEAQVFGKKRKSVLDQVAAQAILHGFFEGGPAECFNGREG.

Belongs to the YqgF nuclease family.

The protein localises to the cytoplasm. Functionally, could be a nuclease involved in processing of the 5'-end of pre-16S rRNA. The chain is Putative pre-16S rRNA nuclease from Neisseria meningitidis serogroup C (strain 053442).